The following is a 208-amino-acid chain: 3-demethoxyubiquinol 3-hydroxylase (208 aa).

Residues glutamate 57, glutamate 87, histidine 90, glutamate 139, glutamate 171, and histidine 174 each contribute to the Fe cation site.

This sequence belongs to the COQ7 family. Fe cation serves as cofactor.

Its subcellular location is the cell membrane. It carries out the reaction a 5-methoxy-2-methyl-3-(all-trans-polyprenyl)benzene-1,4-diol + AH2 + O2 = a 3-demethylubiquinol + A + H2O. It participates in cofactor biosynthesis; ubiquinone biosynthesis. In terms of biological role, catalyzes the hydroxylation of 2-nonaprenyl-3-methyl-6-methoxy-1,4-benzoquinol during ubiquinone biosynthesis. The polypeptide is 3-demethoxyubiquinol 3-hydroxylase (Burkholderia pseudomallei (strain 1106a)).